The primary structure comprises 319 residues: MNSRIIGTGSYYPSDVRTNADLSLMVDTSDEWITDRTGIKERRIIGEHETAATMGFEASKKALEAAGIDAKSLDMIVCATTSGRYSLPSTACEIQKALDVDGIPAFDVAAACAGYCYALSVADQYIKSGMAKRILVVGTDCLSRMISPEDRTMVILFGDAAGATIIEASEEPGILSTHIHAAGSYGDLLAIGNPTRGDESSIHENWGSMKGNEVFRVAVTKLSEIVEETLAANNMQKSDLDWLVPHQANFRIIKATAKKLDMSLDQVVITLERYGNTSAATVPTALDEAIRDGRIKRGQNLLLEAFGGGFAWASALVRY.

Active-site residues include Cys112 and His246. An ACP-binding region spans residues 247–251 (QANFR). The active site involves Asn276.

It belongs to the thiolase-like superfamily. FabH family. Homodimer.

It localises to the cytoplasm. It carries out the reaction malonyl-[ACP] + acetyl-CoA + H(+) = 3-oxobutanoyl-[ACP] + CO2 + CoA. Its pathway is lipid metabolism; fatty acid biosynthesis. In terms of biological role, catalyzes the condensation reaction of fatty acid synthesis by the addition to an acyl acceptor of two carbons from malonyl-ACP. Catalyzes the first condensation reaction which initiates fatty acid synthesis and may therefore play a role in governing the total rate of fatty acid production. Possesses both acetoacetyl-ACP synthase and acetyl transacylase activities. Its substrate specificity determines the biosynthesis of branched-chain and/or straight-chain of fatty acids. In Pseudoalteromonas atlantica (strain T6c / ATCC BAA-1087), this protein is Beta-ketoacyl-[acyl-carrier-protein] synthase III.